We begin with the raw amino-acid sequence, 130 residues long: Putative transposase for insertion sequence element IS6501 (130 aa).

It belongs to the transposase 11 family.

Its function is as follows. Involved in the transposition of the insertion sequence. This chain is Putative transposase for insertion sequence element IS6501, found in Brucella ovis (strain ATCC 25840 / 63/290 / NCTC 10512).